The primary structure comprises 507 residues: Dolichyl pyrophosphate Man9GlcNAc2 alpha-1,3-glucosyltransferase (507 aa).

The Cytoplasmic segment spans residues 1–2 (ME). The chain crosses the membrane as a helical span at residues 3 to 23 (SWTWMTVVVLLGLTVRWTVSL). Residues 24–114 (NSYSGAGKPP…SQAHKLFMRT (91 aa)) lie on the Lumenal side of the membrane. Asn-59 carries an N-linked (GlcNAc...) asparagine glycan. Residues 115 to 135 (TVLAADLLIYIPAVLLYCYSL) traverse the membrane as a helical segment. The Cytoplasmic portion of the chain corresponds to 136–143 (KEISPKRK). The chain crosses the membrane as a helical span at residues 144–164 (IASALCILLYPGLILIDYGHF). Topologically, residues 165-172 (QYNSVSLG) are lumenal. The chain crosses the membrane as a helical span at residues 173-193 (FALWGVLGVSCDWDLLGSLAF). Residues 194–229 (CLALNYKQMELYHSLPFFCFLLGKCFKKGLRGKGSA) are Cytoplasmic-facing. The helical transmembrane segment at 230–250 (LFIRIACTVVASFLLCWLPFL) threads the bilayer. Residues 251–297 (TEREHALQVVRRLFPVDRGLFEDKVANIWCSLNVFLKIKDILPRHIQ) lie on the Lumenal side of the membrane. The helical transmembrane segment at 298-318 (IAISFCFTFLSLLPACIKLTV) threads the bilayer. Over 319-332 (QPSAKGFRFTLVSC) the chain is Cytoplasmic. A helical transmembrane segment spans residues 333–353 (ALSFFLFSFQVHEKSILLVSL). Over 354–361 (PVCLVLTE) the chain is Lumenal. Residues 362–382 (IPFMSTWFLLVSTFSMLPLLL) traverse the membrane as a helical segment. At 383–385 (KDQ) the chain is on the cytoplasmic side. Residues 386–406 (LLLPSVVTVMAFLIACSTFFP) traverse the membrane as a helical segment. Topologically, residues 407–437 (MFENTSEEQLQLKSFAVSVRRHLPGFTFLPR) are lumenal. The helical transmembrane segment at 438–458 (IIQCLFLSSVITMILLTILSV) threads the bilayer. The Cytoplasmic portion of the chain corresponds to 459 to 468 (TLDPPQKLPD). A helical transmembrane segment spans residues 469-489 (LFSVLICFVSCVNFVFFLVYF). Residues 490 to 507 (NIVIMWDSKNGRNRKKID) are Lumenal-facing.

This sequence belongs to the ALG6/ALG8 glucosyltransferase family.

The protein localises to the endoplasmic reticulum membrane. The enzyme catalyses an alpha-D-Man-(1-&gt;2)-alpha-D-Man-(1-&gt;2)-alpha-D-Man-(1-&gt;3)-[alpha-D-Man-(1-&gt;2)-alpha-D-Man-(1-&gt;3)-[alpha-D-Man-(1-&gt;2)-alpha-D-Man-(1-&gt;6)]-alpha-D-Man-(1-&gt;6)]-beta-D-Man-(1-&gt;4)-beta-D-GlcNAc-(1-&gt;4)-alpha-D-GlcNAc-diphospho-di-trans,poly-cis-dolichol + a di-trans,poly-cis-dolichyl beta-D-glucosyl phosphate = an alpha-D-Glc-(1-&gt;3)-alpha-D-Man-(1-&gt;2)-alpha-D-Man-(1-&gt;2)-alpha-D-Man-(1-&gt;3)-[alpha-D-Man-(1-&gt;2)-alpha-D-Man-(1-&gt;3)-[alpha-D-Man-(1-&gt;2)-alpha-D-Man-(1-&gt;6)]-alpha-D-Man-(1-&gt;6)]-beta-D-Man-(1-&gt;4)-beta-D-GlcNAc-(1-&gt;4)-alpha-D-GlcNAc-diphospho-di-trans,poly-cis-dolichol + a di-trans,poly-cis-dolichyl phosphate + H(+). Its pathway is protein modification; protein glycosylation. Its function is as follows. Dolichyl pyrophosphate Man9GlcNAc2 alpha-1,3-glucosyltransferase that operates in the biosynthetic pathway of dolichol-linked oligosaccharides, the glycan precursors employed in protein asparagine (N)-glycosylation. The assembly of dolichol-linked oligosaccharides begins on the cytosolic side of the endoplasmic reticulum membrane and finishes in its lumen. The sequential addition of sugars to dolichol pyrophosphate produces dolichol-linked oligosaccharides containing fourteen sugars, including two GlcNAcs, nine mannoses and three glucoses. Once assembled, the oligosaccharide is transferred from the lipid to nascent proteins by oligosaccharyltransferases. In the lumen of the endoplasmic reticulum, adds the first glucose residue from dolichyl phosphate glucose (Dol-P-Glc) onto the lipid-linked oligosaccharide intermediate Man(9)GlcNAc(2)-PP-Dol to produce Glc(1)Man(9)GlcNAc(2)-PP-Dol. Glc(1)Man(9)GlcNAc(2)-PP-Dol is a substrate for ALG8, the following enzyme in the biosynthetic pathway. The polypeptide is Dolichyl pyrophosphate Man9GlcNAc2 alpha-1,3-glucosyltransferase (Rattus norvegicus (Rat)).